Here is an 81-residue protein sequence, read N- to C-terminus: Putative membrane protein insertion efficiency factor (81 aa).

A disordered region spans residues 61–81; it reads NDGGFDPVPPAPSSRTSSIAE.

The protein belongs to the UPF0161 family.

It localises to the cell inner membrane. Could be involved in insertion of integral membrane proteins into the membrane. This is Putative membrane protein insertion efficiency factor from Pseudomonas entomophila (strain L48).